A 373-amino-acid chain; its full sequence is ATP phosphoribosyltransferase regulatory subunit (373 aa).

It belongs to the class-II aminoacyl-tRNA synthetase family. HisZ subfamily. As to quaternary structure, heteromultimer composed of HisG and HisZ subunits.

The protein resides in the cytoplasm. The protein operates within amino-acid biosynthesis; L-histidine biosynthesis; L-histidine from 5-phospho-alpha-D-ribose 1-diphosphate: step 1/9. Its function is as follows. Required for the first step of histidine biosynthesis. May allow the feedback regulation of ATP phosphoribosyltransferase activity by histidine. In Rhizobium leguminosarum bv. trifolii (strain WSM2304), this protein is ATP phosphoribosyltransferase regulatory subunit.